The primary structure comprises 271 residues: Protein FANTASTIC FOUR 1 (271 aa).

The 55-residue stretch at 114–168 folds into the FAF domain; it reads NSFPPPLNSVNGFNNSRMVKSYKEDGRLVVQAIRVCSPPRCFVSERREGRLRLCL. Positions 174–255 are disordered; it reads NSQDAEEEFE…KRRCNENGCE (82 aa). Positions 177 to 224 are enriched in acidic residues; that stretch reads DAEEEFEEEDEDDQYDAEEEEEEEEEEEEEEEEEEEEEEEEEEEDEEG. A compositionally biased stretch (basic residues) spans 237–247; sequence GNKKVSNRPKR.

Belongs to the fantastic four family. As to expression, expressed in the shoot apex, stamens, anthers and young siliques. Detected in provascular and vascular tissue.

Able to repress WUS when constitutively overexpressed, but have no effect on CLV3. This Arabidopsis thaliana (Mouse-ear cress) protein is Protein FANTASTIC FOUR 1 (FAF1).